The following is a 485-amino-acid chain: Glutamate--tRNA ligase (485 aa).

The 'HIGH' region motif lies at Pro-11–Asn-21. The short motif at Lys-252–Arg-256 is the 'KMSKS' region element. ATP is bound at residue Lys-255.

It belongs to the class-I aminoacyl-tRNA synthetase family. Glutamate--tRNA ligase type 1 subfamily. Monomer.

It is found in the cytoplasm. It carries out the reaction tRNA(Glu) + L-glutamate + ATP = L-glutamyl-tRNA(Glu) + AMP + diphosphate. Its function is as follows. Catalyzes the attachment of glutamate to tRNA(Glu) in a two-step reaction: glutamate is first activated by ATP to form Glu-AMP and then transferred to the acceptor end of tRNA(Glu). The chain is Glutamate--tRNA ligase from Bacillus cereus (strain ATCC 10987 / NRS 248).